The following is a 160-amino-acid chain: Small ribosomal subunit protein uS7 (160 aa).

The protein belongs to the universal ribosomal protein uS7 family. Part of the 30S ribosomal subunit. Contacts proteins S9 and S11.

One of the primary rRNA binding proteins, it binds directly to 16S rRNA where it nucleates assembly of the head domain of the 30S subunit. Is located at the subunit interface close to the decoding center, probably blocks exit of the E-site tRNA. The protein is Small ribosomal subunit protein uS7 of Hydrogenobaculum sp. (strain Y04AAS1).